Consider the following 159-residue polypeptide: Ribosomal RNA large subunit methyltransferase H (159 aa).

S-adenosyl-L-methionine is bound by residues glycine 108 and 127–132 (FGKLTM).

Belongs to the RNA methyltransferase RlmH family. As to quaternary structure, homodimer.

Its subcellular location is the cytoplasm. The catalysed reaction is pseudouridine(1915) in 23S rRNA + S-adenosyl-L-methionine = N(3)-methylpseudouridine(1915) in 23S rRNA + S-adenosyl-L-homocysteine + H(+). Its function is as follows. Specifically methylates the pseudouridine at position 1915 (m3Psi1915) in 23S rRNA. The protein is Ribosomal RNA large subunit methyltransferase H of Lactobacillus helveticus (strain DPC 4571).